We begin with the raw amino-acid sequence, 210 residues long: THAP domain-containing protein 1 (210 aa).

The THAP-type zinc finger occupies cysteine 5–histidine 57. The short motif at aspartate 131–tyrosine 134 is the HCFC1-binding motif (HBM) element. The stretch at methionine 140–lysine 187 forms a coiled coil.

It belongs to the THAP1 family. Interacts with PAWR. Component of a THAP1/THAP3-HCFC1-OGT complex that contains, either THAP1 or THAP3, HCFC1 and OGT. Interacts with OGT. Interacts (via the HBM) with HCFC1 (via the Kelch-repeat domain); the interaction recruits HCFC1 to the RRM1 promoter.

Its subcellular location is the nucleus. The protein localises to the nucleoplasm. It is found in the PML body. DNA-binding transcription regulator that regulates endothelial cell proliferation and G1/S cell-cycle progression. Specifically binds the 5'-[AT]NTNN[GT]GGCA[AGT]-3' core DNA sequence and acts by modulating expression of pRB-E2F cell-cycle target genes, including RRM1. May also have pro-apoptotic activity by potentiating both serum-withdrawal and TNF-induced apoptosis. This is THAP domain-containing protein 1 (Thap1) from Rattus norvegicus (Rat).